The following is a 352-amino-acid chain: Sodium-lithium/proton antiporter (352 aa).

8 helical membrane passes run 11–31 (ILLLLGILFVVAGYFILPVSV), 32–52 (PLIIALITALFLNPAVRWMQF), 61–81 (AVTIVFLLFVIMIGLLGTYAV), 159–179 (IPEYLISFLVYLIALFLFMLE), 216–236 (AQFLVSIVIFVVCLIGLFWIT), 241–261 (IVMSLIIWIVDFVPIIGSIVI), 271–291 (IVGDIAMGGQLAMLAIILLAI), and 317–337 (IGLQLIGLMGFILGPLLVIAF).

It belongs to the autoinducer-2 exporter (AI-2E) (TC 2.A.86) family.

It is found in the cell membrane. Functionally, catalyzes the pH-dependent efflux of sodium and lithium in exchange for external protons. The sequence is that of Sodium-lithium/proton antiporter from Halobacillus andaensis.